The sequence spans 429 residues: Antho-RFamide neuropeptides type 2 (429 aa).

A signal peptide spans 1 to 22 (MTTVSYVTILLTVLVQVLTSDA). Positions 23–233 (KATNNKRELS…EFQGRFGRED (211 aa)) are excised as a propeptide. Positions 230 to 371 (GREDQGRFGR…EDIAKEDQGR (142 aa)) are enriched in basic and acidic residues. Residues 230 to 429 (GREDQGRFGR…KSDDALAKIS (200 aa)) form a disordered region. At Gln234 the chain carries Pyrrolidone carboxylic acid. The residue at position 237 (Phe237) is a Phenylalanine amide. The propeptide occupies 239–241 (RED). Gln242 carries the post-translational modification Pyrrolidone carboxylic acid. Position 245 is a phenylalanine amide (Phe245). A propeptide spanning residues 247–249 (RED) is cleaved from the precursor. Gln250 carries the post-translational modification Pyrrolidone carboxylic acid. Phe253 is subject to Phenylalanine amide. Positions 255-257 (RED) are excised as a propeptide. The residue at position 258 (Gln258) is a Pyrrolidone carboxylic acid. Position 261 is a phenylalanine amide (Phe261). The propeptide occupies 263 to 265 (RED). Residue Gln266 is modified to Pyrrolidone carboxylic acid. Phenylalanine amide is present on Phe269. Residues 271 to 273 (RED) constitute a propeptide that is removed on maturation. The residue at position 274 (Gln274) is a Pyrrolidone carboxylic acid. Phenylalanine amide is present on Phe277. Positions 279-289 (RELQGRFGRED) are excised as a propeptide. Pyrrolidone carboxylic acid is present on Gln290. Phenylalanine amide is present on Phe293. The propeptide occupies 295–297 (RED). A Pyrrolidone carboxylic acid modification is found at Gln298. Phe301 is modified (phenylalanine amide). The propeptide occupies 303-305 (RED). The residue at position 306 (Gln306) is a Pyrrolidone carboxylic acid. Phe309 carries the phenylalanine amide modification. Positions 311–321 (RELQGRFGRED) are excised as a propeptide. Gln322 carries the post-translational modification Pyrrolidone carboxylic acid. Phe325 carries the post-translational modification Phenylalanine amide. The propeptide occupies 327-329 (RED). Pyrrolidone carboxylic acid is present on Gln330. Residue Phe333 is modified to Phenylalanine amide. A propeptide spanning residues 335 to 342 (REDLAKED) is cleaved from the precursor. Gln343 carries the pyrrolidone carboxylic acid modification. A Phenylalanine amide modification is found at Phe346. Positions 348 to 355 (REDLAKED) are excised as a propeptide. Gln356 is modified (pyrrolidone carboxylic acid). Position 359 is a phenylalanine amide (Phe359). Positions 361–368 (REDIAKED) are excised as a propeptide. Gln369 is subject to Pyrrolidone carboxylic acid. Phe372 is subject to Phenylalanine amide. A propeptide spanning residues 374–429 (RNAAAAAKKRTIDVIDIESDPKPQTRFRDGKDMQEKRKVEKKDKIEKSDDALAKIS) is cleaved from the precursor. The span at 392-429 (SDPKPQTRFRDGKDMQEKRKVEKKDKIEKSDDALAKIS) shows a compositional bias: basic and acidic residues.

The protein belongs to the FARP (FMRFamide related peptide) family.

Its subcellular location is the secreted. In terms of biological role, not known but it could act as a transmitter at neuromuscular synapses. This chain is Antho-RFamide neuropeptides type 2, found in Anthopleura elegantissima (Green aggregating anemone).